The sequence spans 287 residues: uncharacterized protein (287 aa).

This is an uncharacterized protein from Methanocaldococcus jannaschii (strain ATCC 43067 / DSM 2661 / JAL-1 / JCM 10045 / NBRC 100440) (Methanococcus jannaschii).